A 78-amino-acid chain; its full sequence is DNA-directed RNA polymerase subunit omega (78 aa).

It belongs to the RNA polymerase subunit omega family. In terms of assembly, in cyanobacteria the RNAP catalytic core is composed of 2 alpha, 1 beta, 1 beta', 1 gamma and 1 omega subunit. When a sigma factor is associated with the core the holoenzyme is formed, which can initiate transcription.

The catalysed reaction is RNA(n) + a ribonucleoside 5'-triphosphate = RNA(n+1) + diphosphate. Functionally, promotes RNA polymerase assembly. Latches the N- and C-terminal regions of the beta' subunit thereby facilitating its interaction with the beta and alpha subunits. The chain is DNA-directed RNA polymerase subunit omega from Prochlorococcus marinus (strain AS9601).